A 2555-amino-acid chain; its full sequence is MDVSKEAGHHANGFANGNTNGTTNGHTNGHTNAHTNVHTNVHTNGHANGHTKVHTNGNTNGTANETANEATNRTPNATSTTTTTFEGQLPQVPVAICGIGVRLPGGVRSDSDLYQMLVEKRDARAIVPADRYNIKSYYDPRGRPGSILTEYGYYIDEDLAQMDASMFSMSNVELSMMDPAQRLLLEVTREAFEGAGEGDFRGKNIGTFVGDFTTDWQELQYADLIHTAPYQVIGGSDFVLSNRLAYEYNLTGPSASIKTACSATAEALHEALLAIRAGSCPSAIVAGANLILTPRGGIGMTAMGVLSPDGSCKTFDSSANGFARGDSVCAIYIKRLDLALRDGNPIRAVIRACDSNADGGGTGRTFGTPNPITHEALIRKTYADAGLELHNTSVIECHGTGTPIGDPLEAEAVANCFADGKRPVYIGSVKPNLGHGEGGSAMASIIKAVVALENRTIIPNVKFKNPNPKIAWDKNLKVPTEPLPWPQDCQERMSINSFGLGGSNTHIIIDSAASFGIPSPHSSLHETADLSNEAQTSILLMSANSLSSITAMSQRYSEYVQAHPDRVEDMAYTLATRRERLKQASYCIFNDGVLSTPPPPVVSSGIVQTAFIFTGQGAQWLGMGKELMQQQRAFAHSIREMDAVIKSLEYAPDWSLEDSDADKSALAQTDRAQPISTALQVALVDLLATWNVHPAAVVGHSSGEVAAAYAARILTRREAIITAFYRGHACARCEIPGGMAAVGLGRTKVEPLLKSGVVIACENSNASVTISGDRDALEEAMAGLREKYPTTLVRKLQVPMGYHSHHMATVADLYHRLVSPHLDPKSPQVPYFSTVYGRQVQEAKAFGPSYWQLNMESPVLFRTAVSEMLREMGSNTAHLEVGPHSALAGPLRQIYEETGLSAPYASTMVRGQNSCTAFLEGIGKLFCFGLSPQIPSSKTRTVLPDIPTYPWDYKDKFWSETRVMSNWRFKKHRTHELLGERSLESSDIEPCWRNLLRTGTVPWLADHCVGSDIIFPAAGFIAMAGAAASQLAGSDGHYTVREVHIFSALVLHETTATELITTLRKQPLTSSLQSKWFEFSISSESNGVWTKYCSGLVTASVVTSAGLPEMPDTTAFSRKVDTSRWYTSMSRIGLNYGRRFVGLEDISCSPVHQVASVQINDVQDDYEPYPLHPSTIDKFLQSWTLAFTKGEYRLLTQLYLPTFIEELSVAPAPGKKISGRTLASGIPGTTVGSSLGVVDDELVLSLRGFKCKKTDDAFIQNVSKPRSMTLEWHLDTNFTDLHQLIKPTRDTAPENEILERLYVLYALENWDQLKNSTSSHPHLNIYLSWLEEEVKGFTEPGHPLISDSKELVSMDVPHRRREIAFLRQRSKHYPMAAAVEVYARTCARMVEIMEGKDNLLNVLLEGDLLAKFYNYYNDASDLSSFFQAAGLNKPHMRVLEIGAGTGGWTAHALRGLTSELGDRLYEEYTITDVSHGFLNQCKERFAAHSNIKYALLDISSDPLEQGFEEGYYDIVIASNLVETLCRCRKVLNPAGCLLIQEACAPGSRHGYIMGLFEGWWAGREDGRVRSPLIPVEEWDARLKLAGFEGAGTVVLDGQVPYYNYANIIARPAPTTIAQPESRLTLMTSSPELEDFSAILKTMLEEAGYLLDVCPWGADLPSDQDVVFLVDTEASVPVLADENPDNLATFLRYMKDISTSTVLWVTKPAQTICPDPRHGLITGMARTLRAELDMYIATLEIHKLDKPAASAVVQVLRKLQDAARLEESQGDEKSSDIKVDFEYAFSNGELLIPRFHPFVVDQVLLKDVPCADSRHLEIAQRGMLNTLHWVGDTLPELGPSEVELNMTAVGMNFLDLAVAMNIVDMAQSLGKGYNALGSEGSGIVTRVGSSVTNLKVGDRVATMGVDTSVFASKLQRPAESCVRLPPGLSDEDAAGILVPYATVLWSFIEKARLKKGQTVLIHSAAGGVGIAAIHVARWIGAEIYTTVGAQAKVDFLVNELDVPRDRIFHSRDDSFVKDVLSATNGKGIDVVLNSLSGELLHATWQCVAPGGCMLEIGKRDFLGRAQLAMHLFEENRAYFGIDLSRLALSEPEALQELLQKTMVLLEKQQLQPLWPTNTFDAVAVEDAFRYMQRGVHMGRIVVRMPEDDSVLPIAPVLPEPQFKADSTYLLTGGMGGLGRSIIRWMVSYGAKDITVMSRSAGNRDVDRALIAEIGELGCTLQCFAADIADMHSLQNVLSSLSKPVAGVLHMAMVLRDVGTLNMDFDSWTAALRPKVQGTWNLHDKLSENLDFFVLFSSISGTLGSYGQANYAAGNTFLDSFVRFRHGLGRPASVIDIAAIGDVGYVAETKDVAERIGRAFGSLGTEQEFLDTLQLAIARSTGPPEQQELSSKKTTKYAQPSQIVMHNRMIPPLSDPRNTTPWKNDARMAIYRNTEEAPQSTSSQSKERLGLFLVSLTTDPDQLDEPETPIIFAQEIAKRVAAFLMKGDKEDNALDTSLTLSQMGADSLVAIEIRNWWKQTFGMEISTLELNSPGQTFDSLGRLATKRLKEAYILKSS.

The interval 1-84 is disordered; the sequence is MDVSKEAGHH…PNATSTTTTT (84 aa). Residues 10–84 show a composition bias toward low complexity; sequence HANGFANGNT…PNATSTTTTT (75 aa). The 421-residue stretch at 91–511 folds into the Ketosynthase family 3 (KS3) domain; the sequence is QVPVAICGIG…GSNTHIIIDS (421 aa). Active-site for beta-ketoacyl synthase activity residues include Cys-261, His-398, and His-435. The interval 611 to 928 is malonyl-CoA:ACP transacylase (MAT) domain; sequence FIFTGQGAQW…LEGIGKLFCF (318 aa). The segment at 975–1104 is N-terminal hotdog fold; the sequence is HELLGERSLE…GLVTASVVTS (130 aa). Residues 975–1256 form a dehydratase (DH) domain region; it reads HELLGERSLE…RGFKCKKTDD (282 aa). The region spanning 975-1260 is the PKS/mFAS DH domain; it reads HELLGERSLE…CKKTDDAFIQ (286 aa). Catalysis depends on His-1007, which acts as the Proton acceptor; for dehydratase activity. The tract at residues 1117–1260 is C-terminal hotdog fold; it reads SRKVDTSRWY…CKKTDDAFIQ (144 aa). The Proton donor; for dehydratase activity role is filled by Asp-1177. Residues 1424–1595 are methyltransferase (CMet) domain; sequence SFFQAAGLNK…GFEGAGTVVL (172 aa). The interval 1821–2141 is enoyl reductase (ER) (ER) domain; that stretch reads GMLNTLHWVG…RGVHMGRIVV (321 aa). Positions 2165–2338 are ketoreductase (KR) domain; it reads STYLLTGGMG…PASVIDIAAI (174 aa). Residues 2468–2546 form the Carrier domain; sequence IIFAQEIAKR…SLGRLATKRL (79 aa). Ser-2505 bears the O-(pantetheine 4'-phosphoryl)serine mark.

It functions in the pathway secondary metabolite biosynthesis. Highly reducing polyketide synthase (HR-PKS); part of the gene cluster that mediates the biosynthesis of squalestatin S1 (SQS1, also known as zaragozic acid A), a heavily oxidized fungal polyketide that offers potent cholesterol lowering activity by targeting squalene synthase (SS). SQS1 is composed of a 2,8-dioxobicyclic[3.2.1]octane-3,4,5-tricarboxyclic acid core that is connected to two lipophilic polyketide arms. These initial steps feature the priming of an unusual benzoic acid starter unit onto the highly reducing polyketide synthase clz14, followed by oxaloacetate extension and product release to generate a tricarboxylic acid containing product. The phenylalanine ammonia lyase (PAL) clz10 and the acyl-CoA ligase clz12 are involved in transforming phenylalanine into benzoyl-CoA. The citrate synthase-like protein clz17 is involved in connecting the C-alpha-carbons of the hexaketide chain and oxaloacetate to afford the tricarboxylic acid unit. The potential hydrolytic enzymes, clz11 and clz13, are in close proximity to pks2 and may participate in product release. On the other side, the tetraketide arm is synthesized by a the squalestatin tetraketide synthase clz2 and enzymatically esterified to the core in the last biosynthetic step, by the acetyltransferase clz6. The biosynthesis of the tetraketide must involve 3 rounds of chain extension. After the first and second rounds methyl-transfer occurs, and in all rounds of extension the ketoreductase and dehydratase are active. The enoyl reductase and C-MeT of clz2 are not active in the final round of extension. The acetyltransferase clz6 appears to have a broad substrate selectivity for its acyl CoA substrate, allowing the in vitro synthesis of novel squalestatins. The biosynthesis of SQS1 requires several oxidative steps likely performed by oxidoreductases clz3, clz15 and clz16. Finally, in support of the identification of the cluster as being responsible for SQS1 production, the cluster contains a gene encoding a putative squalene synthase (SS) clz20, suggesting a likely mechanism for self-resistance. The polypeptide is Squalestatin hexaketide synthase clz14 (Cochliobolus lunatus (Filamentous fungus)).